A 340-amino-acid chain; its full sequence is Cell growth-regulated gene 1 protein (340 aa).

The protein belongs to the SMP-30/CGR1 family.

Functionally, involved in the cell growth regulation. The protein is Cell growth-regulated gene 1 protein (CGR1) of Candida albicans (strain SC5314 / ATCC MYA-2876) (Yeast).